A 159-amino-acid polypeptide reads, in one-letter code: Small ribosomal subunit protein uS4 (159 aa).

Residues 106–158 enclose the S4 RNA-binding domain; the sequence is RRLQTLVFRMGLAKSIHHARQLVVHGHVLVAGRRVTSPGFLVPRELEDKITIE.

It belongs to the universal ribosomal protein uS4 family. Part of the 30S ribosomal subunit. Contacts protein S5. The interaction surface between S4 and S5 is involved in control of translational fidelity.

Its function is as follows. One of the primary rRNA binding proteins, it binds directly to 16S rRNA where it nucleates assembly of the body of the 30S subunit. Functionally, with S5 and S12 plays an important role in translational accuracy. This chain is Small ribosomal subunit protein uS4, found in Pyrobaculum calidifontis (strain DSM 21063 / JCM 11548 / VA1).